The primary structure comprises 246 residues: NLP effector protein Pc118548 (246 aa).

The signal sequence occupies residues 1–19 (MNFRAFLLAAIAGIATINA). The Hepta-peptide GHRHDWE motif signature appears at 122–128 (GHRHYWE). A glycan (N-linked (GlcNAc...) asparagine) is linked at asparagine 141.

The protein belongs to the Necrosis inducing protein (NPP1) family.

Its subcellular location is the secreted. Secreted effector that contributes strongly to virulence during infection by P.capsici. Induces cell death in the Solanaceae, including Nicotiana benthamiana and hot pepper. The chain is NLP effector protein Pc118548 from Phytophthora capsici.